A 383-amino-acid polypeptide reads, in one-letter code: MKFPRIGLPKEKVIELINEKTKKDLTFSSGKILGSMCTMPHDLAIEVYTKYIDRNLGDPGLHPGTRKIEEEVIEMISDLLHLEKGHGHIVSGGTEANILAVRAFRNLSDVEKPELILPKSAHFSFIKAGEMLGVKLVWAELNPDYTVDVRDVEAKISDNTIGIVGIAGTTGLGVVDDIPALSDLARDYGIPLHVDAAFGGFVIPFAKELGYELPDFDFKLKGVQSITIDPHKMGMAPIPAGGIVFRRKKYLKAISVLAPYLAGGKVWQATITGTRPGASVIAVWALIKHLGFEGYMRIVERAMKLSRWFAEEIKKINNAWLVREPMLNIVSFQTKNLKKVERELKSRGWGISAHRGYIRIVFMPHVTREMIEEFLKDLKEVLS.

At K232 the chain carries N6-(pyridoxal phosphate)lysine.

It belongs to the group II decarboxylase family. MfnA subfamily. As to quaternary structure, monomer. The cofactor is pyridoxal 5'-phosphate.

The catalysed reaction is L-aspartate + H(+) = beta-alanine + CO2. It carries out the reaction L-glutamate + H(+) = 4-aminobutanoate + CO2. The enzyme catalyses L-cysteate + H(+) = taurine + CO2. It catalyses the reaction 3-sulfino-L-alanine + H(+) = hypotaurine + CO2. Its pathway is cofactor biosynthesis; coenzyme A biosynthesis. Functionally, catalyzes the decarboxylation of L-aspartate to produce beta-alanine, and the decarboxylation of L-glutamate to produce 4-aminobutanoate. Can also use cysteate and, to a lesser extent, cysteine sulfite (3-sulfino-L-alanine), but not L-tyrosine. Specific activities toward L-aspartate and cysteate are higher than toward L-glutamate. The sequence is that of L-aspartate/L-glutamate decarboxylase from Pyrococcus horikoshii (strain ATCC 700860 / DSM 12428 / JCM 9974 / NBRC 100139 / OT-3).